The primary structure comprises 504 residues: Maturase K (504 aa).

Belongs to the intron maturase 2 family. MatK subfamily.

Its subcellular location is the plastid. It is found in the chloroplast. Its function is as follows. Usually encoded in the trnK tRNA gene intron. Probably assists in splicing its own and other chloroplast group II introns. In Bombax buonopozense (Red-flowered silk cotton tree), this protein is Maturase K.